Reading from the N-terminus, the 87-residue chain is Beta-defensin 109 (87 aa).

A signal peptide spans 1-22 (MRLHLLLLILLLFSILLSPVRG). 3 cysteine pairs are disulfide-bonded: cysteine 31–cysteine 59, cysteine 38–cysteine 53, and cysteine 43–cysteine 60.

The protein belongs to the beta-defensin family.

It localises to the secreted. Its function is as follows. Has antibacterial activity. The protein is Beta-defensin 109 (DEFB109) of Pan troglodytes (Chimpanzee).